A 196-amino-acid polypeptide reads, in one-letter code: SPRY domain-containing protein 7 (196 aa).

The residue at position 2 (A2) is an N-acetylalanine. The region spanning 2–184 is the B30.2/SPRY domain; sequence AASVFCCLRC…FSEFYHTPPP (183 aa).

The chain is SPRY domain-containing protein 7 (SPRYD7) from Bos taurus (Bovine).